A 195-amino-acid polypeptide reads, in one-letter code: Adenylate kinase (195 aa).

Gly10 to Thr15 contributes to the ATP binding site. Residues Ser30 to Val59 form an NMP region. Residues Thr31, Arg36, Glu57–Val59, Gly85–Arg88, and Gln92 each bind AMP. The LID stretch occupies residues Asn126–Asp140. Residue Arg127 participates in ATP binding. 2 residues coordinate AMP: Arg137 and Arg148. Arg176 serves as a coordination point for ATP.

The protein belongs to the adenylate kinase family. Monomer.

The protein resides in the cytoplasm. The catalysed reaction is AMP + ATP = 2 ADP. The protein operates within purine metabolism; AMP biosynthesis via salvage pathway; AMP from ADP: step 1/1. Functionally, catalyzes the reversible transfer of the terminal phosphate group between ATP and AMP. Plays an important role in cellular energy homeostasis and in adenine nucleotide metabolism. This is Adenylate kinase from Thermosynechococcus vestitus (strain NIES-2133 / IAM M-273 / BP-1).